We begin with the raw amino-acid sequence, 679 residues long: NADPH--cytochrome P450 reductase (679 aa).

Topologically, residues 1-21 (MASEQTIDGAAAIPSGGGDEP) are lumenal. Residues 22 to 42 (FLGLLDVALLAVLIGGAAFYF) form a helical membrane-spanning segment. Topologically, residues 43–679 (LRSRKKEEEP…QKRYSADVWS (637 aa)) are cytoplasmic. A Flavodoxin-like domain is found at 84–228 (LVVFYGSQTG…DFITWKDRFW (145 aa)). Residues 90–95 (SQTGTG), 142–145 (ATYG), 177–186 (LGNKTYEHYN), and Asp-212 contribute to the FMN site. An FAD-binding FR-type domain is found at 283–523 (KNPFLAPIKV…FIRKSQFRLP (241 aa)). Arg-302 provides a ligand contact to NADP(+). Residues 458–461 (RYYS), 476–478 (TAV), Tyr-482, and 492–495 (GVAT) each bind FAD. NADP(+)-binding positions include Thr-537, 597 to 598 (SR), 603 to 607 (KVYVQ), and Asp-640. Trp-678 contacts FAD.

The protein belongs to the NADPH--cytochrome P450 reductase family. It in the N-terminal section; belongs to the flavodoxin family. In the C-terminal section; belongs to the flavoprotein pyridine nucleotide cytochrome reductase family. In terms of assembly, interacts with sturkopf. FAD serves as cofactor. FMN is required as a cofactor. In terms of tissue distribution, high in antennae.

It is found in the endoplasmic reticulum membrane. The catalysed reaction is 2 oxidized [cytochrome P450] + NADPH = 2 reduced [cytochrome P450] + NADP(+) + H(+). This enzyme is required for electron transfer from NADP to cytochrome p450 in microsomes. It can also provide electron transfer to heme oxygenase and cytochrome b5. May function to clear the olfactory organ (antennae) from accumulating chemicals. This Drosophila melanogaster (Fruit fly) protein is NADPH--cytochrome P450 reductase (Cpr).